Here is a 172-residue protein sequence, read N- to C-terminus: Protein-export protein SecB (172 aa).

The interval 152–172 (AQGAEGGNSGIVMPDGSQARH) is disordered.

Belongs to the SecB family. As to quaternary structure, homotetramer, a dimer of dimers. One homotetramer interacts with 1 SecA dimer.

It is found in the cytoplasm. In terms of biological role, one of the proteins required for the normal export of preproteins out of the cell cytoplasm. It is a molecular chaperone that binds to a subset of precursor proteins, maintaining them in a translocation-competent state. It also specifically binds to its receptor SecA. The chain is Protein-export protein SecB from Cupriavidus taiwanensis (strain DSM 17343 / BCRC 17206 / CCUG 44338 / CIP 107171 / LMG 19424 / R1) (Ralstonia taiwanensis (strain LMG 19424)).